Reading from the N-terminus, the 192-residue chain is ATP-dependent Clp protease proteolytic subunit 1 (192 aa).

The active-site Nucleophile is Ser-92. His-117 is an active-site residue.

Belongs to the peptidase S14 family. Fourteen ClpP subunits assemble into 2 heptameric rings which stack back to back to give a disk-like structure with a central cavity, resembling the structure of eukaryotic proteasomes.

It is found in the cytoplasm. The enzyme catalyses Hydrolysis of proteins to small peptides in the presence of ATP and magnesium. alpha-casein is the usual test substrate. In the absence of ATP, only oligopeptides shorter than five residues are hydrolyzed (such as succinyl-Leu-Tyr-|-NHMec, and Leu-Tyr-Leu-|-Tyr-Trp, in which cleavage of the -Tyr-|-Leu- and -Tyr-|-Trp bonds also occurs).. Cleaves peptides in various proteins in a process that requires ATP hydrolysis. Has a chymotrypsin-like activity. Plays a major role in the degradation of misfolded proteins. The sequence is that of ATP-dependent Clp protease proteolytic subunit 1 from Chlamydia muridarum (strain MoPn / Nigg).